A 544-amino-acid polypeptide reads, in one-letter code: Chaperonin GroEL (544 aa).

Residues 30 to 33 (TLGP), K51, 87 to 91 (DGTTT), G415, 479 to 481 (NAA), and D495 each bind ATP. Over residues 525-537 (PQDTPATAAAPDM) the composition is skewed to low complexity. The disordered stretch occupies residues 525 to 544 (PQDTPATAAAPDMGGMGGMM).

The protein belongs to the chaperonin (HSP60) family. In terms of assembly, forms a cylinder of 14 subunits composed of two heptameric rings stacked back-to-back. Interacts with the co-chaperonin GroES.

Its subcellular location is the cytoplasm. The enzyme catalyses ATP + H2O + a folded polypeptide = ADP + phosphate + an unfolded polypeptide.. Together with its co-chaperonin GroES, plays an essential role in assisting protein folding. The GroEL-GroES system forms a nano-cage that allows encapsulation of the non-native substrate proteins and provides a physical environment optimized to promote and accelerate protein folding. The polypeptide is Chaperonin GroEL (Ruthia magnifica subsp. Calyptogena magnifica).